A 55-amino-acid chain; its full sequence is uncharacterized protein (55 aa).

A run of 2 helical transmembrane segments spans residues V2 to A19 and L24 to F46.

Its subcellular location is the cell membrane. This is an uncharacterized protein from Alkalihalophilus pseudofirmus (strain ATCC BAA-2126 / JCM 17055 / OF4) (Bacillus pseudofirmus).